The following is a 1356-amino-acid chain: RHO1 GDP-GTP exchange protein 2 (1356 aa).

Ser2 bears the N-acetylserine mark. Disordered regions lie at residues 74-94 (RRSGVEAAIDDSDIPNNEMKG) and 109-175 (EVPD…PRNE). Phosphoserine is present on Ser76. 2 stretches are compositionally biased toward polar residues: residues 109–125 (EVPDTQSLSSADNTPVS) and 147–157 (HIYSTSNSASR). Ser193 carries the phosphoserine modification. Disordered stretches follow at residues 202 to 291 (LKKQ…RSMS), 303 to 362 (SFQS…SSSN), 383 to 409 (SVSGTSLSSPRRSSMTPLSASRPVMSA), 531 to 571 (GNHS…SQQK), and 626 to 645 (NISMALDDDDEEKPSWTSSV). The span at 204–221 (KQSSFSTGSASTTPTQAR) shows a compositional bias: polar residues. The residue at position 223 (Ser223) is a Phosphoserine. Basic and acidic residues predominate over residues 235-244 (SSKDLHEQHQ). Residues 250–265 (QHNNINNHNNNNTNNN) show a composition bias toward low complexity. Residues 271–281 (VGSSNSNYPQH) are compositionally biased toward polar residues. Residues 282–291 (SHSISSRSMS) are compositionally biased toward low complexity. Residues 303–325 (SFQSKTSNSRKATQKYDITSNPF) are compositionally biased toward polar residues. Over residues 329 to 338 (HHHHHHHHSS) the composition is skewed to basic residues. Composition is skewed to low complexity over residues 339–362 (NSHSSLNNVHGSGNSSSVMGSSSN) and 383–401 (SVSGTSLSSPRRSSMTPLS). Residues Ser566 and Ser628 each carry the phosphoserine modification. Residues 659–846 (KRQEAIYEVY…RDFMKRIDQA (188 aa)) enclose the DH domain. The CNH domain maps to 1034 to 1336 (TNKINSVTSC…RLLQTSTQEI (303 aa)).

In terms of biological role, stimulates the exchange of RHO1 GDP-bound form into GTP-bound form. The polypeptide is RHO1 GDP-GTP exchange protein 2 (ROM2) (Saccharomyces cerevisiae (strain ATCC 204508 / S288c) (Baker's yeast)).